A 630-amino-acid polypeptide reads, in one-letter code: Mitochondrial Rho GTPase 1 (630 aa).

Residues 1 to 168 form the Miro 1 domain; the sequence is MKEVRVVICG…FYMCRACVIY (168 aa). The Cytoplasmic portion of the chain corresponds to 1–598; the sequence is MKEVRVVICG…EEDSNKTNYQ (598 aa). Residues 10 to 17, 57 to 61, and 113 to 116 each bind GTP; these read GDQGVGKS, DTQSD, and NKSE. EF-hand domains lie at 184–219 and 304–339; these read ATIH…CFSK and KGYR…TPGL. Asp-197, Asn-199, Asp-201, Glu-208, Asp-317, Asp-319, Asp-321, and Glu-328 together coordinate Ca(2+). The Miro 2 domain occupies 419–579; the sequence is RNVFLCFVVG…FIQLAESAQY (161 aa). GTP-binding positions include 428–435, 459–463, and 527–530; these read GSKSCGKT, EFQST, and TKAD. A helical; Anchor for type IV membrane protein membrane pass occupies residues 599-619; the sequence is LVAALTAFGALLLSVGGSLTW. The Mitochondrial intermembrane segment spans residues 620-630; it reads KIIKHQYYSKK.

Belongs to the mitochondrial Rho GTPase family.

It is found in the mitochondrion outer membrane. Functionally, mitochondrial GTPase involved in mitochondrial trafficking. Probably involved in control of anterograde transport of mitochondria and their subcellular distribution. The chain is Mitochondrial Rho GTPase 1 (gem1) from Schizosaccharomyces pombe (strain 972 / ATCC 24843) (Fission yeast).